Here is a 232-residue protein sequence, read N- to C-terminus: Adenosylcobinamide-GDP ribazoletransferase (232 aa).

6 helical membrane passes run 31-51, 59-79, 102-122, 126-146, 167-187, and 209-229; these read LPSF…LGAL, VFFL…GFLD, VGPF…NLYL, PFYF…LMAF, LLIS…YIIS, and VTGD…LLIL.

Belongs to the CobS family. Mg(2+) is required as a cofactor.

It is found in the cell inner membrane. It carries out the reaction alpha-ribazole + adenosylcob(III)inamide-GDP = adenosylcob(III)alamin + GMP + H(+). The enzyme catalyses alpha-ribazole 5'-phosphate + adenosylcob(III)inamide-GDP = adenosylcob(III)alamin 5'-phosphate + GMP + H(+). Its pathway is cofactor biosynthesis; adenosylcobalamin biosynthesis; adenosylcobalamin from cob(II)yrinate a,c-diamide: step 7/7. In terms of biological role, joins adenosylcobinamide-GDP and alpha-ribazole to generate adenosylcobalamin (Ado-cobalamin). Also synthesizes adenosylcobalamin 5'-phosphate from adenosylcobinamide-GDP and alpha-ribazole 5'-phosphate. The chain is Adenosylcobinamide-GDP ribazoletransferase from Thermosipho africanus (strain TCF52B).